Consider the following 362-residue polypeptide: Putative RING-H2 finger protein ATL21B (362 aa).

Positions 1 to 23 (MIISKQLFLLFFLLFFIFPLRHA) are cleaved as a signal peptide. The helical transmembrane segment at 234–254 (VVAVLICLSIIGAVILFVTCI) threads the bilayer. The RING-type; atypical zinc-finger motif lies at 316–358 (CPICLSEYVSKETVRFIPECDHCFHAKCIDVWLKIHGSCPLCR).

It belongs to the RING-type zinc finger family. ATL subfamily.

Its subcellular location is the membrane. It catalyses the reaction S-ubiquitinyl-[E2 ubiquitin-conjugating enzyme]-L-cysteine + [acceptor protein]-L-lysine = [E2 ubiquitin-conjugating enzyme]-L-cysteine + N(6)-ubiquitinyl-[acceptor protein]-L-lysine.. It participates in protein modification; protein ubiquitination. The protein is Putative RING-H2 finger protein ATL21B (ATL21B) of Arabidopsis thaliana (Mouse-ear cress).